The chain runs to 122 residues: Large ribosomal subunit protein bL12 (122 aa).

It belongs to the bacterial ribosomal protein bL12 family. In terms of assembly, homodimer. Part of the ribosomal stalk of the 50S ribosomal subunit. Forms a multimeric L10(L12)X complex, where L10 forms an elongated spine to which 2 to 4 L12 dimers bind in a sequential fashion. Binds GTP-bound translation factors.

In terms of biological role, forms part of the ribosomal stalk which helps the ribosome interact with GTP-bound translation factors. Is thus essential for accurate translation. The sequence is that of Large ribosomal subunit protein bL12 from Clostridium botulinum (strain Langeland / NCTC 10281 / Type F).